The sequence spans 456 residues: Aminotransferase ALD1, chloroplastic (456 aa).

A chloroplast-targeting transit peptide spans 1-43 (MVSLMFFSSASPLCSSPSKIPKASLDFEMKKLGGSTKLVRNVN). Residues Tyr108, 142-143 (AQ), Asn223, Asp251, Tyr254, Ser281, Ser283, Arg292, and Asn323 contribute to the pyridoxal 5'-phosphate site.

This sequence belongs to the class-I pyridoxal-phosphate-dependent aminotransferase family. LL-diaminopimelate aminotransferase subfamily. Requires pyridoxal 5'-phosphate as cofactor. Highly expressed in senescing leaves, flowers, siliques and seeds.

It localises to the plastid. The protein resides in the chloroplast. In terms of biological role, aminotransferase involved in local and systemic acquired resistance (SAR) to the bacterial pathogen P.syringae. Required for salicylic acid (SA) and camalexin accumulation upon pathogen infection. Possesses aminotransferase activity in vitro and may generate amino-acid-derived defense signals in vivo. May be involved in ethylene-induced senescence signaling. Involved in the biosynthesis of pipecolate (Pip), a metabolite that orchestrates defense amplification, positive regulation of SA biosynthesis, and priming to guarantee effective local resistance induction and the establishment of SAR. Converts lysine to alpha-keto-epsilon-aminocaproate, which then can spontaneously cyclize to form delta-(1)-piperideine-2-carboxylate (P2C). P2C is converted to Pip by SARD4. May produce non-Pip metabolites that play roles in immunity. Involved in the synthesis of distinct metabolite signals that affect basal and early defenses, and later defense responses. The polypeptide is Aminotransferase ALD1, chloroplastic (Arabidopsis thaliana (Mouse-ear cress)).